The following is a 181-amino-acid chain: Adenylate kinase (181 aa).

ATP is bound at residue 10-15; sequence GAGKGT. The NMP stretch occupies residues 30-59; that stretch reads STGELFRRNIEEGTKLGVEAKRYLDAGDLV. AMP-binding positions include Thr-31, Arg-36, 57–59, 85–88, and Gln-92; these read DLV and GYPR. Positions 126-132 are LID; it reads GRGRADD. Arg-127 contributes to the ATP binding site. 2 residues coordinate AMP: Arg-129 and Arg-140. Gly-166 lines the ATP pocket.

This sequence belongs to the adenylate kinase family. Monomer.

It localises to the cytoplasm. The enzyme catalyses AMP + ATP = 2 ADP. It participates in purine metabolism; AMP biosynthesis via salvage pathway; AMP from ADP: step 1/1. Catalyzes the reversible transfer of the terminal phosphate group between ATP and AMP. Plays an important role in cellular energy homeostasis and in adenine nucleotide metabolism. In Mycobacterium tuberculosis (strain ATCC 25177 / H37Ra), this protein is Adenylate kinase.